Consider the following 240-residue polypeptide: Coatomer subunit delta (240 aa).

Residues 215 to 226 (AAAKASSAPKAK) show a composition bias toward low complexity. A disordered region spans residues 215–240 (AAAKASSAPKAKGMQLGKKKNTSLLY). A compositionally biased stretch (basic residues) spans 231–240 (GKKKNTSLLY).

It belongs to the adaptor complexes medium subunit family. Delta-COP subfamily. As to quaternary structure, oligomeric complex that consists of at least the alpha, beta, beta', gamma, delta, epsilon and zeta subunits.

The protein localises to the cytoplasm. It is found in the nucleus. The coatomer is a cytosolic protein complex that binds to dilysine motifs and reversibly associates with Golgi non-clathrin-coated vesicles, which further mediate biosynthetic protein transport from the ER, via the Golgi up to the trans Golgi network. Coatomer complex is required for budding from Golgi membranes, and is essential for the retrograde Golgi-to-ER transport of dilysine-tagged proteins. The polypeptide is Coatomer subunit delta (ret2) (Schizosaccharomyces pombe (strain 972 / ATCC 24843) (Fission yeast)).